Consider the following 118-residue polypeptide: Small ribosomal subunit protein uS13 (118 aa).

A disordered region spans residues 94–118 (GLPVRGQRTKTNARTRKGPRKPIRK).

Belongs to the universal ribosomal protein uS13 family. In terms of assembly, part of the 30S ribosomal subunit. Forms a loose heterodimer with protein S19. Forms two bridges to the 50S subunit in the 70S ribosome.

Functionally, located at the top of the head of the 30S subunit, it contacts several helices of the 16S rRNA. In the 70S ribosome it contacts the 23S rRNA (bridge B1a) and protein L5 of the 50S subunit (bridge B1b), connecting the 2 subunits; these bridges are implicated in subunit movement. Contacts the tRNAs in the A and P-sites. The sequence is that of Small ribosomal subunit protein uS13 from Pseudomonas aeruginosa (strain LESB58).